The chain runs to 159 residues: MQCPTCQNTDSRVLESRSADSGKSVRRRRECLNCSFRFTTYERVESMPVSVMKKDGSRELFDKQKLFTGISRACEKTNFSSEAIINFVDGIESQIVQDSNKDIKSSQIGELILKNLRKENEVAYIRYASVYRKFNGVKDFISTLESLKGSSKNQLASIS.

The segment covering 1–11 has biased composition (polar residues); sequence MQCPTCQNTDS. Residues 1-21 are disordered; it reads MQCPTCQNTDSRVLESRSADS. A zinc finger lies at 3-34; it reads CPTCQNTDSRVLESRSADSGKSVRRRRECLNC. The region spanning 49-139 is the ATP-cone domain; sequence VSVMKKDGSR…VYRKFNGVKD (91 aa).

The protein belongs to the NrdR family. Zn(2+) is required as a cofactor.

Its function is as follows. Negatively regulates transcription of bacterial ribonucleotide reductase nrd genes and operons by binding to NrdR-boxes. The polypeptide is Transcriptional repressor NrdR (Prochlorococcus marinus (strain MIT 9215)).